The following is a 400-amino-acid chain: Enoyl-[acyl-carrier-protein] reductase [NADH] (400 aa).

Residues 48-53 (GASTGY), 74-75 (FE), 111-112 (DA), and 139-140 (LA) contribute to the NAD(+) site. Tyr225 lines the substrate pocket. The Proton donor role is filled by Tyr235. NAD(+) contacts are provided by residues Lys244 and 273–275 (VVT).

It belongs to the TER reductase family. Monomer.

The enzyme catalyses a 2,3-saturated acyl-[ACP] + NAD(+) = a (2E)-enoyl-[ACP] + NADH + H(+). It participates in lipid metabolism; fatty acid biosynthesis. Its function is as follows. Involved in the final reduction of the elongation cycle of fatty acid synthesis (FAS II). Catalyzes the reduction of a carbon-carbon double bond in an enoyl moiety that is covalently linked to an acyl carrier protein (ACP). This is Enoyl-[acyl-carrier-protein] reductase [NADH] from Burkholderia ambifaria (strain ATCC BAA-244 / DSM 16087 / CCUG 44356 / LMG 19182 / AMMD) (Burkholderia cepacia (strain AMMD)).